The following is a 357-amino-acid chain: NADH-quinone oxidoreductase subunit H (357 aa).

8 helical membrane passes run 25–45 (ILIILIKAITLVIPLMLVVAY), 94–114 (IYLFLLAPVLAIAPAIAVWVV), 130–150 (LLYVLAIGSIGVYGIILAGWA), 166–186 (LLVSYEIVIGFALATVVMIAG), 201–221 (IIYWNFIPLFPMMIIFFISAL), 254–274 (FFLAEYANMILMAVLAVVMFF), 294–314 (VPGIIWLLAKTTFFMFLYLWV), and 329–349 (LSWKVFLPITIIWIFVVALMT).

This sequence belongs to the complex I subunit 1 family. NDH-1 is composed of 14 different subunits. Subunits NuoA, H, J, K, L, M, N constitute the membrane sector of the complex.

It localises to the cell inner membrane. It carries out the reaction a quinone + NADH + 5 H(+)(in) = a quinol + NAD(+) + 4 H(+)(out). Its function is as follows. NDH-1 shuttles electrons from NADH, via FMN and iron-sulfur (Fe-S) centers, to quinones in the respiratory chain. The immediate electron acceptor for the enzyme in this species is believed to be ubiquinone. Couples the redox reaction to proton translocation (for every two electrons transferred, four hydrogen ions are translocated across the cytoplasmic membrane), and thus conserves the redox energy in a proton gradient. This subunit may bind ubiquinone. This is NADH-quinone oxidoreductase subunit H from Ruthia magnifica subsp. Calyptogena magnifica.